The following is a 462-amino-acid chain: MIVTRFAPSPTGYLHIGGLRTALFNWLWARKNGGKFILRIEDTDLARNSEEATKAILEAFDWVGLDYDGDVAYQSKRFDIYKRYIQKLLDEGKAYYCYMSKEELDRLREEQMKRGERPRYDRRYRDFTGTPPQGVQPVVRIKAPLEGDIVFEDGIKGIVTIKAEELDDFIIARSDGTPTYNFVVAIDDALMGVTDVIRGDDHLYNTPKQIIVYEALGLPIPRFYHVPMILNEQGKKLSKRDGAMDVMEYKKMGYLPEALLNFLVRLGWSHGDQEIFSLQEMKELFDPKDINKSASAYNLSKLQWLNAHYIKNTPNEKLVKLLEEFGLFLSDHDKKEILLDALKERAKTLQELADMAKEILEAPKNYDEKGVKKALKGEWKAILELFLQKLKASDAHLPSDFHAIIEAVVEEKEIGFGKIGQPLRLALLGKMAGPDLSDVMAIIGKEETIARVEKLIKEKGNS.

The 'HIGH' region motif lies at 8–18; the sequence is PSPTGYLHIGG. The 'KMSKS' region signature appears at 236–240; the sequence is KLSKR. An ATP-binding site is contributed by Lys-239.

This sequence belongs to the class-I aminoacyl-tRNA synthetase family. Glutamate--tRNA ligase type 1 subfamily. In terms of assembly, monomer.

The protein localises to the cytoplasm. It catalyses the reaction tRNA(Glu) + L-glutamate + ATP = L-glutamyl-tRNA(Glu) + AMP + diphosphate. Functionally, catalyzes the attachment of glutamate to tRNA(Glu) in a two-step reaction: glutamate is first activated by ATP to form Glu-AMP and then transferred to the acceptor end of tRNA(Glu). The protein is Glutamate--tRNA ligase 2 of Nitratiruptor sp. (strain SB155-2).